The primary structure comprises 276 residues: Chymotrypsin (276 aa).

Residues 1–16 form the signal peptide; sequence MKVALVVLALFGVSLA. A propeptide spans 17 to 45 (activation peptide); the sequence is ASIDNIEIPPSKNIYVEPINQPEVDPSLE. Residues 46–272 form the Peptidase S1 domain; that stretch reads IVNGQEVVPH…YLNWLQTHSE (227 aa). An intrachain disulfide couples Cys74 to Cys90. Catalysis depends on charge relay system residues His89 and Asp135. N-linked (GlcNAc...) asparagine glycans are attached at residues Asn144 and Asn193. 2 cysteine pairs are disulfide-bonded: Cys202-Cys215 and Cys225-Cys250. Ser229 acts as the Charge relay system in catalysis.

Belongs to the peptidase S1 family. Expressed in larval carcasses and gut, and adult gut.

Its subcellular location is the secreted. It localises to the extracellular space. The catalysed reaction is Preferential cleavage: Tyr-|-Xaa, Trp-|-Xaa, Phe-|-Xaa, Leu-|-Xaa.. Serine protease with chymotryptic and collagenolytic activities. This chain is Chymotrypsin, found in Phaedon cochleariae (Mustard beetle).